We begin with the raw amino-acid sequence, 255 residues long: Thiazole synthase (255 aa).

K96 acts as the Schiff-base intermediate with DXP in catalysis. Residues G157, A183–G184, and N205–T206 contribute to the 1-deoxy-D-xylulose 5-phosphate site.

It belongs to the ThiG family. In terms of assembly, homotetramer. Forms heterodimers with either ThiH or ThiS.

Its subcellular location is the cytoplasm. The enzyme catalyses [ThiS sulfur-carrier protein]-C-terminal-Gly-aminoethanethioate + 2-iminoacetate + 1-deoxy-D-xylulose 5-phosphate = [ThiS sulfur-carrier protein]-C-terminal Gly-Gly + 2-[(2R,5Z)-2-carboxy-4-methylthiazol-5(2H)-ylidene]ethyl phosphate + 2 H2O + H(+). Its pathway is cofactor biosynthesis; thiamine diphosphate biosynthesis. Functionally, catalyzes the rearrangement of 1-deoxy-D-xylulose 5-phosphate (DXP) to produce the thiazole phosphate moiety of thiamine. Sulfur is provided by the thiocarboxylate moiety of the carrier protein ThiS. In vitro, sulfur can be provided by H(2)S. The protein is Thiazole synthase of Staphylococcus epidermidis (strain ATCC 12228 / FDA PCI 1200).